The chain runs to 478 residues: GTPase Obg (478 aa).

Residues T2–V159 form the Obg domain. The segment at Y60–V88 is disordered. An OBG-type G domain is found at A160–A330. Residues G166–S173, F191–V195, D212–G215, N282–D285, and S311–V313 each bind GTP. Mg(2+) is bound by residues S173 and T193. The region spanning P348–P430 is the OCT domain. Residues M438–F478 form a disordered region. Composition is skewed to basic and acidic residues over residues L439–A450 and R457–A468. A compositionally biased stretch (acidic residues) spans Q469–F478.

The protein belongs to the TRAFAC class OBG-HflX-like GTPase superfamily. OBG GTPase family. Monomer. The cofactor is Mg(2+).

It is found in the cytoplasm. The protein localises to the cell membrane. Its function is as follows. Plays an unknown essential role and a regulatory role in sporulation. Overexpression suppresses sporulation although cell growth rate was not reduced. Impaired differentiation was eliminated by addition of decoyinine, an inhibitor of GMP synthesis. Overexpression has no effect on undecylprodigiosin production, but decreases actinorhodin production. In terms of biological role, an essential GTPase which binds GTP, GDP and possibly (p)ppGpp with moderate affinity, with high nucleotide exchange rates and a fairly low GTP hydrolysis rate. Plays a role in control of the cell cycle, stress response, ribosome biogenesis and in those bacteria that undergo differentiation, in morphogenesis control. This is GTPase Obg from Streptomyces coelicolor (strain ATCC BAA-471 / A3(2) / M145).